A 255-amino-acid chain; its full sequence is 1-(5-phosphoribosyl)-5-[(5-phosphoribosylamino)methylideneamino] imidazole-4-carboxamide isomerase (255 aa).

Catalysis depends on D8, which acts as the Proton acceptor. The active-site Proton donor is D129.

This sequence belongs to the HisA/HisF family.

The protein localises to the cytoplasm. It carries out the reaction 1-(5-phospho-beta-D-ribosyl)-5-[(5-phospho-beta-D-ribosylamino)methylideneamino]imidazole-4-carboxamide = 5-[(5-phospho-1-deoxy-D-ribulos-1-ylimino)methylamino]-1-(5-phospho-beta-D-ribosyl)imidazole-4-carboxamide. It participates in amino-acid biosynthesis; L-histidine biosynthesis; L-histidine from 5-phospho-alpha-D-ribose 1-diphosphate: step 4/9. The chain is 1-(5-phosphoribosyl)-5-[(5-phosphoribosylamino)methylideneamino] imidazole-4-carboxamide isomerase from Prochlorococcus marinus (strain MIT 9313).